The following is a 39-amino-acid chain: Sarcotoxin-1C (39 aa).

Arg-39 bears the Arginine amide mark.

The protein belongs to the cecropin family.

Its subcellular location is the secreted. Sarcotoxins, which are potent bactericidal proteins, are produced in response to injury. They are cytotoxic to both Gram-positive and Gram-negative bacteria. The chain is Sarcotoxin-1C from Sarcophaga peregrina (Flesh fly).